A 445-amino-acid polypeptide reads, in one-letter code: tRNA-2-methylthio-N(6)-dimethylallyladenosine synthase (445 aa).

One can recognise an MTTase N-terminal domain in the interval 3–124 (KKLYIKTYGC…LPELISKVVR (122 aa)). 6 residues coordinate [4Fe-4S] cluster: Cys-12, Cys-48, Cys-87, Cys-162, Cys-166, and Cys-169. Residues 148 to 380 (YPQGASSFIS…QQELTAQQLA (233 aa)) enclose the Radical SAM core domain. Residues 383–445 (ESCVGSIMKV…ASNSLTGEVI (63 aa)) enclose the TRAM domain.

Belongs to the methylthiotransferase family. MiaB subfamily. In terms of assembly, monomer. It depends on [4Fe-4S] cluster as a cofactor.

The protein resides in the cytoplasm. The enzyme catalyses N(6)-dimethylallyladenosine(37) in tRNA + (sulfur carrier)-SH + AH2 + 2 S-adenosyl-L-methionine = 2-methylsulfanyl-N(6)-dimethylallyladenosine(37) in tRNA + (sulfur carrier)-H + 5'-deoxyadenosine + L-methionine + A + S-adenosyl-L-homocysteine + 2 H(+). Catalyzes the methylthiolation of N6-(dimethylallyl)adenosine (i(6)A), leading to the formation of 2-methylthio-N6-(dimethylallyl)adenosine (ms(2)i(6)A) at position 37 in tRNAs that read codons beginning with uridine. This is tRNA-2-methylthio-N(6)-dimethylallyladenosine synthase from Rickettsia felis (strain ATCC VR-1525 / URRWXCal2) (Rickettsia azadi).